Reading from the N-terminus, the 282-residue chain is MGKVLDGKTFANLLGQNLKEKVKKLKDEGITPHFCVINIGDDPASKIYVRTKKRRAEKMGIIQDIYQMSADTKQEEAIALIDKLNADPAINGLMVQLPAPKQIDTDALIERIDPNKDADGLTPANIGHLWMDKHFVEPATAEGIIALLKHYEIPLEGKNVVIIGRSNIVGKPLAALMLEQNATVTIAHSRTKNLGEITKKADVLVSATGQAFLVKADMVKDGAVVVDVGMNHVDGKLVGDVDFDNVKEKASYITPVPGGVGPLTVQFLMEAVVKLTRRQNDR.

Residues Gly164–Ser166 and Ser189 contribute to the NADP(+) site.

This sequence belongs to the tetrahydrofolate dehydrogenase/cyclohydrolase family. As to quaternary structure, homodimer.

The enzyme catalyses (6R)-5,10-methylene-5,6,7,8-tetrahydrofolate + NADP(+) = (6R)-5,10-methenyltetrahydrofolate + NADPH. The catalysed reaction is (6R)-5,10-methenyltetrahydrofolate + H2O = (6R)-10-formyltetrahydrofolate + H(+). It functions in the pathway one-carbon metabolism; tetrahydrofolate interconversion. Catalyzes the oxidation of 5,10-methylenetetrahydrofolate to 5,10-methenyltetrahydrofolate and then the hydrolysis of 5,10-methenyltetrahydrofolate to 10-formyltetrahydrofolate. The polypeptide is Bifunctional protein FolD (Lactobacillus helveticus (strain DPC 4571)).